The chain runs to 228 residues: MVGYSGEHFIFNVVKYMDILNFYIYGFVSLFITIDPIGLIPIVHSLTYPYPKEQRIRIIKKAIISSTVVLLLFALFGNYIFGYFGITIDAFRVAGGILLFKIAWDMLHAEIPKTKHKPDERLDLEDIDSIVYVPLAIPLISGPGAITTTMILISKTQSILEKGVVVLSILSAMLVSGIILSLTDFIIRRVNIYGINAFVRIMGLLLVAISVQIIFTGIVGLYNSISVQ.

Transmembrane regions (helical) follow at residues F22–I42, V68–I88, V133–I153, G163–T183, and I201–L221.

This sequence belongs to the UPF0056 (MarC) family.

The protein localises to the cell membrane. In Methanocaldococcus jannaschii (strain ATCC 43067 / DSM 2661 / JAL-1 / JCM 10045 / NBRC 100440) (Methanococcus jannaschii), this protein is UPF0056 membrane protein MJ0972.